The primary structure comprises 379 residues: MAYKVLVVDDSSFFRRRVTDILNKDPKLNVIDVAVNGQEAVDKALLLKPDVITMDIEMPILNGIEAVRKIMAQSPTSILMFSSLTHQGAKATLEALDAGALDFLPKKFSEIAKNSDEAGSLLRQRVVEIARKSEFSKQRTRTRPAAVNISPKSSRLIADQHRPLASTSSLVTKDKKVMAAITRSSGKEYKLLAIGTSTGGPVALQKILVQLEENFPLPIIIVQHMPAAFTAAFASRLNSLCKISIKEAADGDVLKPGCAYLAPGGRQMLISGSENSAKIKILDDDSPKITFKPSVDISFGSAAKTFAGKVLGVILTGMGSDGKEGARMLKAKGATIWSQDEQSCVVYGMPQAIDKAGISELSLSLDSMAASMVKEISRG.

In terms of domain architecture, Response regulatory spans 4–121; it reads KVLVVDDSSF…AKNSDEAGSL (118 aa). Aspartate 55 carries the post-translational modification 4-aspartylphosphate. In terms of domain architecture, CheB-type methylesterase spans 185 to 379; it reads SGKEYKLLAI…ASMVKEISRG (195 aa). Active-site residues include serine 197, histidine 224, and aspartate 321.

The protein belongs to the CheB family. Phosphorylated by CheA. Phosphorylation of the N-terminal regulatory domain activates the methylesterase activity.

The protein resides in the cytoplasm. The enzyme catalyses [protein]-L-glutamate 5-O-methyl ester + H2O = L-glutamyl-[protein] + methanol + H(+). It catalyses the reaction L-glutaminyl-[protein] + H2O = L-glutamyl-[protein] + NH4(+). Involved in chemotaxis. Part of a chemotaxis signal transduction system that modulates chemotaxis in response to various stimuli. Catalyzes the demethylation of specific methylglutamate residues introduced into the chemoreceptors (methyl-accepting chemotaxis proteins or MCP) by CheR. Also mediates the irreversible deamidation of specific glutamine residues to glutamic acid. The polypeptide is Protein-glutamate methylesterase/protein-glutamine glutaminase (Colwellia psychrerythraea (strain 34H / ATCC BAA-681) (Vibrio psychroerythus)).